The following is a 308-amino-acid chain: Tyramine--L-glutamate ligase (308 aa).

An ATP-grasp domain is found at 89 to 291 (KSLLKSENID…LAELLIKNAN (203 aa)). An ATP-binding site is contributed by 115–192 (TKIIESYPVK…QEFIDGENLS (78 aa)). Residues D252, E264, and N266 each coordinate Mg(2+). Residues D252, E264, and N266 each contribute to the Mn(2+) site.

Requires Mg(2+) as cofactor. It depends on Mn(2+) as a cofactor.

The catalysed reaction is tyramine + L-glutamate + ATP = gamma-L-glutamyltyramine + ADP + phosphate + H(+). It participates in cofactor biosynthesis; methanofuran biosynthesis. Catalyzes the formation of an amide bond between tyramine and the gamma carboxy group of L-glutamate. The enzyme also accepts phenylethylamine in vitro. The polypeptide is Tyramine--L-glutamate ligase (mfnD) (Methanocaldococcus jannaschii (strain ATCC 43067 / DSM 2661 / JAL-1 / JCM 10045 / NBRC 100440) (Methanococcus jannaschii)).